Consider the following 107-residue polypeptide: Large ribosomal subunit protein uL24 (107 aa).

Belongs to the universal ribosomal protein uL24 family. Part of the 50S ribosomal subunit.

Its function is as follows. One of two assembly initiator proteins, it binds directly to the 5'-end of the 23S rRNA, where it nucleates assembly of the 50S subunit. Functionally, one of the proteins that surrounds the polypeptide exit tunnel on the outside of the subunit. This chain is Large ribosomal subunit protein uL24, found in Coxiella burnetii (strain Dugway 5J108-111).